Consider the following 463-residue polypeptide: MKKTLVKSLYRETEKFIDKDIEISGWIRTIRDSKSFAFIELNDGSFFKNVQVVLDDKIENFKEIIKLPISSSLSVEGTLILTPNAKQSFEIKAKKISLEGNSSSEYPLQKKRHTLEYLRTIAHLRPRSNTFSAVFRVRSIAAYAVHKFFQEKDFVYVNTPIITGSDCEGAGEMFRITTMDLNNVPKEEDNSVDFSKDFFGKETNLTVSGQLSAETMALAFRNVYTFGPTFRAEDSNTSRHAAEFWMIEPEMAFAELKDYMDTAEELVKYIINYVLEKAPEEMAFFNSFIDKSLFDRLNNVVNSEFGRITYTEAVDILQKSGASFQYPVEWGIDLQTEHERYLTEKVFEKPIFVTDYPKAIKAFYMRENEDGKTVAAADLLVPGVGEIVGGSQREERLSVLEKRISEFGLNKEDYWWYLELRKYGETKHSGFGLGFERILMYITGMSNIRDVIPFPRTPGSAEF.

Belongs to the class-II aminoacyl-tRNA synthetase family. As to quaternary structure, homodimer.

It is found in the cytoplasm. The catalysed reaction is tRNA(Asn) + L-asparagine + ATP = L-asparaginyl-tRNA(Asn) + AMP + diphosphate + H(+). This chain is Asparagine--tRNA ligase, found in Clostridium kluyveri (strain ATCC 8527 / DSM 555 / NBRC 12016 / NCIMB 10680 / K1).